We begin with the raw amino-acid sequence, 243 residues long: MSKTIIIGNWKMNKTFTQTKEFFSAFNQLYIENKNKINQNLDFAVALPAINVAAFSKNTTKLELAVQNMSQFEKGAYTGEISAQMLLDLNVKYAIIGHSERRQYFKETDLDVNAKTQQAIKNNIIPVVCVGETLEEYEAQKTSQVIEYQLKNSLKDVDLSKVIVAYEPIWAIGTGKTATPEQAQQVCKFIRKQTNKNLTILYGGSVSQENIEQLLNQADINGALVGGASLKVDSFIKLLTLNK.

Asn-9–Lys-11 is a binding site for substrate. The active-site Electrophile is the His-98. Glu-167 serves as the catalytic Proton acceptor. Substrate is bound by residues Gly-173, Ser-205, and Gly-226–Gly-227.

Belongs to the triosephosphate isomerase family. As to quaternary structure, homodimer.

Its subcellular location is the cytoplasm. It carries out the reaction D-glyceraldehyde 3-phosphate = dihydroxyacetone phosphate. It participates in carbohydrate biosynthesis; gluconeogenesis. It functions in the pathway carbohydrate degradation; glycolysis; D-glyceraldehyde 3-phosphate from glycerone phosphate: step 1/1. In terms of biological role, involved in the gluconeogenesis. Catalyzes stereospecifically the conversion of dihydroxyacetone phosphate (DHAP) to D-glyceraldehyde-3-phosphate (G3P). The protein is Triosephosphate isomerase of Mesomycoplasma hyorhinis (Mycoplasma hyorhinis).